The chain runs to 750 residues: Ribosomal RNA large subunit methyltransferase K/L (750 aa).

Residues 46 to 157 (TAYRLCLWSR…RGEAILSLDL (112 aa)) form the THUMP domain.

This sequence belongs to the methyltransferase superfamily. RlmKL family.

The protein resides in the cytoplasm. The catalysed reaction is guanosine(2445) in 23S rRNA + S-adenosyl-L-methionine = N(2)-methylguanosine(2445) in 23S rRNA + S-adenosyl-L-homocysteine + H(+). It carries out the reaction guanosine(2069) in 23S rRNA + S-adenosyl-L-methionine = N(2)-methylguanosine(2069) in 23S rRNA + S-adenosyl-L-homocysteine + H(+). In terms of biological role, specifically methylates the guanine in position 2445 (m2G2445) and the guanine in position 2069 (m7G2069) of 23S rRNA. This is Ribosomal RNA large subunit methyltransferase K/L from Pseudomonas syringae pv. tomato (strain ATCC BAA-871 / DC3000).